Consider the following 225-residue polypeptide: Cytidylate kinase (225 aa).

12 to 20 (GPSGAGKGT) serves as a coordination point for ATP.

The protein belongs to the cytidylate kinase family. Type 1 subfamily.

It localises to the cytoplasm. The catalysed reaction is CMP + ATP = CDP + ADP. The enzyme catalyses dCMP + ATP = dCDP + ADP. This chain is Cytidylate kinase, found in Stenotrophomonas maltophilia (strain R551-3).